The following is a 167-amino-acid chain: Small ribosomal subunit protein uS5 (167 aa).

The region spanning 12–75 (LQEKLIAVNR…EKARRSMVTI (64 aa)) is the S5 DRBM domain.

Belongs to the universal ribosomal protein uS5 family. Part of the 30S ribosomal subunit. Contacts proteins S4 and S8.

With S4 and S12 plays an important role in translational accuracy. In terms of biological role, located at the back of the 30S subunit body where it stabilizes the conformation of the head with respect to the body. The chain is Small ribosomal subunit protein uS5 from Vibrio cholerae serotype O1 (strain ATCC 39541 / Classical Ogawa 395 / O395).